The primary structure comprises 351 residues: Nicotinate-nucleotide--dimethylbenzimidazole phosphoribosyltransferase (351 aa).

Residue Glu317 is the Proton acceptor of the active site.

The protein belongs to the CobT family.

The enzyme catalyses 5,6-dimethylbenzimidazole + nicotinate beta-D-ribonucleotide = alpha-ribazole 5'-phosphate + nicotinate + H(+). It functions in the pathway nucleoside biosynthesis; alpha-ribazole biosynthesis; alpha-ribazole from 5,6-dimethylbenzimidazole: step 1/2. Its function is as follows. Catalyzes the synthesis of alpha-ribazole-5'-phosphate from nicotinate mononucleotide (NAMN) and 5,6-dimethylbenzimidazole (DMB). This is Nicotinate-nucleotide--dimethylbenzimidazole phosphoribosyltransferase from Pseudomonas fluorescens (strain SBW25).